A 425-amino-acid polypeptide reads, in one-letter code: Serine--tRNA ligase (425 aa).

232 to 234 (TAE) serves as a coordination point for L-serine. Residues 263–265 (RRE) and Val-279 each bind ATP. Residue Glu-286 participates in L-serine binding. 350–353 (EVVS) provides a ligand contact to ATP. Residue Thr-387 coordinates L-serine.

It belongs to the class-II aminoacyl-tRNA synthetase family. Type-1 seryl-tRNA synthetase subfamily. Homodimer. The tRNA molecule binds across the dimer.

Its subcellular location is the cytoplasm. The enzyme catalyses tRNA(Ser) + L-serine + ATP = L-seryl-tRNA(Ser) + AMP + diphosphate + H(+). It catalyses the reaction tRNA(Sec) + L-serine + ATP = L-seryl-tRNA(Sec) + AMP + diphosphate + H(+). It participates in aminoacyl-tRNA biosynthesis; selenocysteinyl-tRNA(Sec) biosynthesis; L-seryl-tRNA(Sec) from L-serine and tRNA(Sec): step 1/1. In terms of biological role, catalyzes the attachment of serine to tRNA(Ser). Is also able to aminoacylate tRNA(Sec) with serine, to form the misacylated tRNA L-seryl-tRNA(Sec), which will be further converted into selenocysteinyl-tRNA(Sec). In Methanocorpusculum labreanum (strain ATCC 43576 / DSM 4855 / Z), this protein is Serine--tRNA ligase.